Reading from the N-terminus, the 388-residue chain is Succinate--CoA ligase [ADP-forming] subunit beta (388 aa).

Residues 9 to 245 (KELLKSYGLP…KSQENERELK (237 aa)) form the ATP-grasp domain. ATP contacts are provided by residues lysine 46, 53–55 (GRG), glutamate 100, tyrosine 103, and glutamate 108. Mg(2+) is bound by residues asparagine 200 and aspartate 214. Residues asparagine 265 and 322–324 (GIV) each bind substrate.

Belongs to the succinate/malate CoA ligase beta subunit family. In terms of assembly, heterotetramer of two alpha and two beta subunits. Mg(2+) serves as cofactor.

The enzyme catalyses succinate + ATP + CoA = succinyl-CoA + ADP + phosphate. The catalysed reaction is GTP + succinate + CoA = succinyl-CoA + GDP + phosphate. It participates in carbohydrate metabolism; tricarboxylic acid cycle; succinate from succinyl-CoA (ligase route): step 1/1. Its function is as follows. Succinyl-CoA synthetase functions in the citric acid cycle (TCA), coupling the hydrolysis of succinyl-CoA to the synthesis of either ATP or GTP and thus represents the only step of substrate-level phosphorylation in the TCA. The beta subunit provides nucleotide specificity of the enzyme and binds the substrate succinate, while the binding sites for coenzyme A and phosphate are found in the alpha subunit. The sequence is that of Succinate--CoA ligase [ADP-forming] subunit beta from Psychrobacter arcticus (strain DSM 17307 / VKM B-2377 / 273-4).